Here is a 446-residue protein sequence, read N- to C-terminus: Bifunctional protein GlmU (446 aa).

A pyrophosphorylase region spans residues 1–225; that stretch reads MEGIILAAGK…ETEVYGVNDR (225 aa). UDP-N-acetyl-alpha-D-glucosamine-binding positions include 6–9, lysine 20, glutamine 70, and 75–76; these read LAAG and GT. Aspartate 98 contributes to the Mg(2+) binding site. The UDP-N-acetyl-alpha-D-glucosamine site is built by glycine 135, glutamate 150, asparagine 165, and asparagine 223. Asparagine 223 is a binding site for Mg(2+). A linker region spans residues 226-246; sequence VQLARLTKGVYRRKAEALMQE. The N-acetyltransferase stretch occupies residues 247-446; it reads GVTIIDPETV…RQVNKEDYVK (200 aa). UDP-N-acetyl-alpha-D-glucosamine is bound by residues arginine 328 and lysine 346. Histidine 358 acts as the Proton acceptor in catalysis. The UDP-N-acetyl-alpha-D-glucosamine site is built by tyrosine 361 and asparagine 372. Acetyl-CoA is bound by residues alanine 375, 381–382, serine 400, alanine 418, and arginine 435; that span reads NY.

In the N-terminal section; belongs to the N-acetylglucosamine-1-phosphate uridyltransferase family. The protein in the C-terminal section; belongs to the transferase hexapeptide repeat family. Homotrimer. Mg(2+) is required as a cofactor.

It is found in the cytoplasm. The catalysed reaction is alpha-D-glucosamine 1-phosphate + acetyl-CoA = N-acetyl-alpha-D-glucosamine 1-phosphate + CoA + H(+). It catalyses the reaction N-acetyl-alpha-D-glucosamine 1-phosphate + UTP + H(+) = UDP-N-acetyl-alpha-D-glucosamine + diphosphate. It participates in nucleotide-sugar biosynthesis; UDP-N-acetyl-alpha-D-glucosamine biosynthesis; N-acetyl-alpha-D-glucosamine 1-phosphate from alpha-D-glucosamine 6-phosphate (route II): step 2/2. The protein operates within nucleotide-sugar biosynthesis; UDP-N-acetyl-alpha-D-glucosamine biosynthesis; UDP-N-acetyl-alpha-D-glucosamine from N-acetyl-alpha-D-glucosamine 1-phosphate: step 1/1. Its pathway is bacterial outer membrane biogenesis; LPS lipid A biosynthesis. Catalyzes the last two sequential reactions in the de novo biosynthetic pathway for UDP-N-acetylglucosamine (UDP-GlcNAc). The C-terminal domain catalyzes the transfer of acetyl group from acetyl coenzyme A to glucosamine-1-phosphate (GlcN-1-P) to produce N-acetylglucosamine-1-phosphate (GlcNAc-1-P), which is converted into UDP-GlcNAc by the transfer of uridine 5-monophosphate (from uridine 5-triphosphate), a reaction catalyzed by the N-terminal domain. The protein is Bifunctional protein GlmU of Carboxydothermus hydrogenoformans (strain ATCC BAA-161 / DSM 6008 / Z-2901).